Consider the following 221-residue polypeptide: Putative N-acetylmannosamine-6-phosphate 2-epimerase (221 aa).

The protein belongs to the NanE family.

The enzyme catalyses an N-acyl-D-glucosamine 6-phosphate = an N-acyl-D-mannosamine 6-phosphate. The protein operates within amino-sugar metabolism; N-acetylneuraminate degradation; D-fructose 6-phosphate from N-acetylneuraminate: step 3/5. In terms of biological role, converts N-acetylmannosamine-6-phosphate (ManNAc-6-P) to N-acetylglucosamine-6-phosphate (GlcNAc-6-P). The sequence is that of Putative N-acetylmannosamine-6-phosphate 2-epimerase from Clostridium perfringens (strain ATCC 13124 / DSM 756 / JCM 1290 / NCIMB 6125 / NCTC 8237 / Type A).